Here is a 622-residue protein sequence, read N- to C-terminus: Low affinity potassium transport system protein Kup (622 aa).

12 helical membrane-spanning segments follow: residues 9 to 29 (LPAI…TSPL), 49 to 69 (VFGF…IKYL), 103 to 123 (VIMG…TPAI), 137 to 157 (PQLD…LFMI), 165 to 185 (VGQL…GLGL), 213 to 233 (VSFI…ALYA), 247 to 267 (WFTV…ALLL), 276 to 296 (PFFL…AALA), 337 to 357 (IYIP…IVSF), 363 to 383 (LAAA…ILST), 396 to 416 (FVAL…TANL), and 419 to 439 (LLSG…VMTT).

This sequence belongs to the HAK/KUP transporter (TC 2.A.72) family.

The protein resides in the cell inner membrane. The enzyme catalyses K(+)(in) + H(+)(in) = K(+)(out) + H(+)(out). Functionally, responsible for the low-affinity transport of potassium into the cell. Likely operates as a K(+):H(+) symporter. This is Low affinity potassium transport system protein Kup from Escherichia coli O6:K15:H31 (strain 536 / UPEC).